The following is a 518-amino-acid chain: Lysine 5,6-aminomutase alpha subunit (518 aa).

Residues 184–189 (RTTGQS), S238, Y263, R268, and N299 each bind pyridoxal 5'-phosphate.

It belongs to the KamD family. In terms of assembly, heterotetramer of 2 alpha and 2 beta subunits. Adenosylcob(III)alamin is required as a cofactor. It depends on pyridoxal 5'-phosphate as a cofactor.

It carries out the reaction (3S)-3,6-diaminohexanoate = (3S,5S)-3,5-diaminohexanoate. It catalyses the reaction D-lysine = (2R,5S)-2,5-diaminohexanoate. It participates in amino-acid degradation; L-lysine degradation via acetate pathway. Functionally, catalyzes the migration of the L-beta-lysine and D-lysine epsilon amino group to the delta carbon to produce 3,5-diaminohexanoate and 2,5-diaminohexanoate, respectively. The protein is Lysine 5,6-aminomutase alpha subunit of Fusobacterium nucleatum subsp. nucleatum (strain ATCC 25586 / DSM 15643 / BCRC 10681 / CIP 101130 / JCM 8532 / KCTC 2640 / LMG 13131 / VPI 4355).